The primary structure comprises 1003 residues: PHD finger protein 12 (1003 aa).

Positions 29 to 59 (APPKTDEAEKRSRKPEKESRRSGRATNHDSC) are disordered. Residues 32–59 (KTDEAEKRSRKPEKESRRSGRATNHDSC) show a composition bias toward basic and acidic residues. The PHD-type 1 zinc-finger motif lies at 56 to 105 (HDSCDSCKEGGDLLCCDHCPAAFHLQCCNPPLSEEMLPPGEWMCHRCTVR). Positions 59, 61, 62, 79, and 82 each coordinate Zn(2+). Disordered stretches follow at residues 110–183 (EQKK…HNDV) and 234–255 (TTAL…KNVK). Phosphoserine is present on residues Ser-131 and Ser-134. Residues 138-161 (LLDRPASKTELKAIAHARILERRA) show a composition bias toward basic and acidic residues. Over residues 165–178 (GTPTSNASTETPTS) the composition is skewed to polar residues. The SIN3 interacting domain 1 stretch occupies residues 202-241 (VQPQLRRPFELLIAAAMERNPTQFQLPNELTCTTALPGSS). The PHD-type 2; atypical zinc-finger motif lies at 271 to 321 (VKVCFTCNRSCRVAPLIQCDYCPLLFHMDCLEPPLTAMPLGRWMCPNHIEH). Residues Cys-274, Cys-277, Cys-289, Cys-292, His-297, Cys-300, Cys-315, and His-318 each contribute to the Zn(2+) site. The segment at 328–364 (NLTLSNRCQVFDRFQDTISQHVVKVDFLNRIHKKHPP) is SIN3 interacting domain 2. Lys-467 is covalently cross-linked (Glycyl lysine isopeptide (Lys-Gly) (interchain with G-Cter in SUMO2)). Disordered regions lie at residues 531-583 (KAPC…GWPR) and 641-671 (HRKT…VLTP). Ser-555 is modified (phosphoserine). Phosphothreonine is present on residues Thr-557 and Thr-570. The segment covering 641–656 (HRKTVQSQIGPSSTES) has biased composition (polar residues). Residue Thr-670 is modified to Phosphothreonine. Residues 814 to 868 (LYIGTGADMDVCLTNYGHCNYVSGKHACIFYDENTKHYELLNYSEHGTTVDNVLY) enclose the FHA domain. The interval 894–922 (RRRHQKQDEEPSEEAAMMSSQAQGPQRRP) is disordered. Residue Lys-899 forms a Glycyl lysine isopeptide (Lys-Gly) (interchain with G-Cter in SUMO2) linkage. Residues 907–916 (EAAMMSSQAQ) show a composition bias toward low complexity. Residues Lys-972, Lys-986, and Lys-990 each participate in a glycyl lysine isopeptide (Lys-Gly) (interchain with G-Cter in SUMO2) cross-link.

In terms of assembly, component of SIN3 complexes. Interacts with SIN3A in a complex composed of HDAC1, SAP30 and SIN3A. Component of the SIN3B complex, which includes SIN3B, HDAC2 or HDAC1, PHF12 and MORF4L1; interacts directly with all subunits. Interacts with TLE5. As to expression, expressed mainly in heart, brain, lung, liver and testis.

The protein resides in the nucleus. Its function is as follows. Transcriptional repressor acting as key scaffolding subunit of SIN3 complexes which contributes to complex assembly by contacting each core subunit domain, stabilizes the complex and constitutes the substrate receptor by recruiting the H3 histone tail. SIN3 complexes are composed of a SIN3 scaffold subunit, one catalytic core (HDAC1 or HDAC2) and 2 chromatin targeting modules. SIN3B complex represses transcription and counteracts the histone acetyltransferase activity of EP300 through the recognition H3K27ac marks by PHF12 and the activity of the histone deacetylase HDAC2. SIN3B complex is recruited downstream of the constitutively active genes transcriptional start sites through interaction with histones and mitigates histone acetylation and RNA polymerase II progression within transcribed regions contributing to the regulation of transcription. May also repress transcription in a SIN3A-independent manner through recruitment of functional TLE5 complexes to DNA. May also play a role in ribosomal biogenesis. This Mus musculus (Mouse) protein is PHD finger protein 12.